A 384-amino-acid chain; its full sequence is Succinyl-diaminopimelate desuccinylase (384 aa).

His73 is a Zn(2+) binding site. Asp75 is an active-site residue. Asp106 is a Zn(2+) binding site. Glu140 acts as the Proton acceptor in catalysis. Glu141, Glu169, and His358 together coordinate Zn(2+).

It belongs to the peptidase M20A family. DapE subfamily. Homodimer. Requires Zn(2+) as cofactor. Co(2+) serves as cofactor.

The catalysed reaction is N-succinyl-(2S,6S)-2,6-diaminopimelate + H2O = (2S,6S)-2,6-diaminopimelate + succinate. It functions in the pathway amino-acid biosynthesis; L-lysine biosynthesis via DAP pathway; LL-2,6-diaminopimelate from (S)-tetrahydrodipicolinate (succinylase route): step 3/3. Its function is as follows. Catalyzes the hydrolysis of N-succinyl-L,L-diaminopimelic acid (SDAP), forming succinate and LL-2,6-diaminopimelate (DAP), an intermediate involved in the bacterial biosynthesis of lysine and meso-diaminopimelic acid, an essential component of bacterial cell walls. The sequence is that of Succinyl-diaminopimelate desuccinylase from Pelagibacter ubique (strain HTCC1062).